Reading from the N-terminus, the 677-residue chain is Threonine--tRNA ligase (677 aa).

Positions 1–59 constitute a TGS domain; the sequence is MAQATISITVNGEAKEVEATTTGVELFAEDKNIIAVKINGENRDLYTPLNDGDTVDPIA. The interval 255-561 is catalytic; the sequence is DHRKLGAEMD…LLEHYAGAFP (307 aa). Residues cysteine 360, histidine 411, and histidine 538 each contribute to the Zn(2+) site.

It belongs to the class-II aminoacyl-tRNA synthetase family. In terms of assembly, homodimer. Zn(2+) serves as cofactor.

The protein localises to the cytoplasm. The catalysed reaction is tRNA(Thr) + L-threonine + ATP = L-threonyl-tRNA(Thr) + AMP + diphosphate + H(+). Its function is as follows. Catalyzes the attachment of threonine to tRNA(Thr) in a two-step reaction: L-threonine is first activated by ATP to form Thr-AMP and then transferred to the acceptor end of tRNA(Thr). Also edits incorrectly charged L-seryl-tRNA(Thr). The protein is Threonine--tRNA ligase of Bifidobacterium longum (strain NCC 2705).